Reading from the N-terminus, the 779-residue chain is Transcription factor SPT20 homolog (779 aa).

Serine 296 carries the phosphoserine modification. 2 disordered regions span residues 373 to 392 (DEESDSQMSPSHSSTDDHSN) and 420 to 507 (PVKM…IPRK). Positions 424–437 (SHSSSGSASLSQVS) are enriched in low complexity. The span at 445–454 (TETVSVQSSV) shows a compositional bias: polar residues. Low complexity predominate over residues 470 to 479 (SSSGNSSSGN). Position 494 is a phosphothreonine (threonine 494). 2 positions are modified to phosphoserine: serine 519 and serine 524. 2 disordered regions span residues 641–677 (QLSQFTPQQPQQPTTCSPQQPGEQGSEQGSTSQEQAL) and 755–779 (LHHHRHTGSQSKSKMKRGTPTTPKF). Over residues 755–771 (LHHHRHTGSQSKSKMKR) the composition is skewed to basic residues.

It belongs to the SPT20 family. As to quaternary structure, interacts with MAPK14. Interacts with ATG9A. As to expression, highly expressed in testis, moderately in brain and pituitary gland. Expressed in several fetal tissues, including lung, brain, thymus and kidney. Expression is down-regulated in malignant prostate tissues.

It is found in the nucleus. Required for MAP kinase p38 (MAPK11, MAPK12, MAPK13 and/or MAPK14) activation during gastrulation. Required for down-regulation of E-cadherin during gastrulation by regulating E-cadherin protein level downstream from NCK-interacting kinase (NIK) and independently of the regulation of transcription by FGF signaling and Snail. Required for starvation-induced ATG9A trafficking during autophagy. The chain is Transcription factor SPT20 homolog (SUPT20H) from Homo sapiens (Human).